The following is a 248-amino-acid chain: 3-deoxy-manno-octulosonate cytidylyltransferase (248 aa).

It belongs to the KdsB family.

The protein resides in the cytoplasm. It catalyses the reaction 3-deoxy-alpha-D-manno-oct-2-ulosonate + CTP = CMP-3-deoxy-beta-D-manno-octulosonate + diphosphate. The protein operates within nucleotide-sugar biosynthesis; CMP-3-deoxy-D-manno-octulosonate biosynthesis; CMP-3-deoxy-D-manno-octulosonate from 3-deoxy-D-manno-octulosonate and CTP: step 1/1. It functions in the pathway bacterial outer membrane biogenesis; lipopolysaccharide biosynthesis. Functionally, activates KDO (a required 8-carbon sugar) for incorporation into bacterial lipopolysaccharide in Gram-negative bacteria. This chain is 3-deoxy-manno-octulosonate cytidylyltransferase, found in Chlorobaculum parvum (strain DSM 263 / NCIMB 8327) (Chlorobium vibrioforme subsp. thiosulfatophilum).